Consider the following 132-residue polypeptide: Putative holo-[acyl-carrier-protein] synthase (132 aa).

The Mg(2+) site is built by Asp6 and Glu67.

This sequence belongs to the P-Pant transferase superfamily. AcpS family.

It catalyses the reaction apo-[ACP] + CoA = holo-[ACP] + adenosine 3',5'-bisphosphate + H(+). Functionally, transfers the 4'-phosphopantetheine moiety from coenzyme A to a Ser of acyl-carrier-protein. This chain is Putative holo-[acyl-carrier-protein] synthase (new8), found in Schizosaccharomyces pombe (strain 972 / ATCC 24843) (Fission yeast).